Consider the following 358-residue polypeptide: MSSVGDFEEIILHDLKPYYHVPGAIHSEGITFVKETGTLLWVDIFKGEVHKVEDIEQPESSHSFFSISRANYGKNASIEYPPNPDELKESVGCIFPILDGASQNEIKQVLFGSKFGIGKLDFSKSEWEYVILYSECPELSTDRAYKLRSNDGNVSPDGKYIYVGLMSDFPFDLEPIGCLLRVDLLAHKIELVWNCLLIPNAIHWDESDQKTMYVTDSLNFTIWKCPGGDLLKRDELIDVKNSNNQSFESPEPDGSAIWFSKDGKHSGFLFITVWSTSKVQMFDLTNGKLLKEFILPEQTPRVSCCCFVGKDLFVTTANAEINDAVRTNTDKNGGCIYKIPNVLDGNVPLESTKRQPLH.

This sequence belongs to the SMP-30/CGR1 family.

This is an uncharacterized protein from Saccharomyces cerevisiae (strain ATCC 204508 / S288c) (Baker's yeast).